A 172-amino-acid polypeptide reads, in one-letter code: Type IV secretion system putative outer membrane lipoprotein BRA0058/BS1330_II0058 (172 aa).

The N-terminal stretch at 1–15 (MRTLVMVACAVSLAA) is a signal peptide. Residue C16 is the site of N-palmitoyl cysteine attachment. C16 is lipidated: S-diacylglycerol cysteine. The region spanning 58-172 (WPARPPKQTV…RRVDIEILRK (115 aa)) is the OmpA-like domain.

The protein resides in the cell outer membrane. The VirB system could be required for the establishment of the replication niche in the host. This is Type IV secretion system putative outer membrane lipoprotein BRA0058/BS1330_II0058 from Brucella suis biovar 1 (strain 1330).